We begin with the raw amino-acid sequence, 343 residues long: Phosphoribosylformylglycinamidine cyclo-ligase (343 aa).

It belongs to the AIR synthase family.

It is found in the cytoplasm. It catalyses the reaction 2-formamido-N(1)-(5-O-phospho-beta-D-ribosyl)acetamidine + ATP = 5-amino-1-(5-phospho-beta-D-ribosyl)imidazole + ADP + phosphate + H(+). The protein operates within purine metabolism; IMP biosynthesis via de novo pathway; 5-amino-1-(5-phospho-D-ribosyl)imidazole from N(2)-formyl-N(1)-(5-phospho-D-ribosyl)glycinamide: step 2/2. The polypeptide is Phosphoribosylformylglycinamidine cyclo-ligase (Carboxydothermus hydrogenoformans (strain ATCC BAA-161 / DSM 6008 / Z-2901)).